Reading from the N-terminus, the 108-residue chain is uncharacterized protein (108 aa).

Positions 1–20 are cleaved as a signal peptide; the sequence is MNLKSIIFVLFIAFFAFSLA. Asn-39 carries N-linked (GlcNAc...) asparagine glycosylation.

The protein belongs to the Dictyostelium gerABC family.

The protein resides in the secreted. This is an uncharacterized protein from Dictyostelium discoideum (Social amoeba).